Consider the following 1436-residue polypeptide: Probable ATP-dependent RNA helicase spindle-E (1436 aa).

The 168-residue stretch at 124–291 (LAAINANPVV…FTTTNSIPPV (168 aa)) folds into the Helicase ATP-binding domain. Residue 137 to 144 (GETGCGKT) participates in ATP binding. Positions 237-240 (DEVH) match the DEAH box motif. Positions 337–524 (KIIMVIDNME…NSVLRAKELE (188 aa)) constitute a Helicase C-terminal domain. The Tudor domain occupies 940–1003 (ACDISKGMMV…RFMSEELIQQ (64 aa)).

The protein belongs to the DEAD box helicase family. DEAH subfamily.

The protein resides in the cytoplasm. The enzyme catalyses ATP + H2O = ADP + phosphate + H(+). Its function is as follows. Probable ATP-binding RNA helicase which plays a central role during spermatogenesis and oogenesis by repressing transposable elements and preventing their mobilization, which is essential for the germline integrity. Acts via the piRNA metabolic process, which mediates the repression of transposable elements during meiosis by forming complexes composed of piRNAs and Piwi and govern the methylation and subsequent repression of transposons. Involved in the repression of LTR retrotransposon copia. Also involved in telomere regulation by repressing specialized telomeric retroelements HeT-A, TAHRE, and TART; Drosophila telomeres being maintained by transposition of specialized telomeric retroelements. Involved in telomeric trans-silencing, a repression mechanism by which a transposon or a transgene inserted in subtelomeric heterochromatin has the capacity to repress in trans in the female germline, a homologous transposon, or transgene located in euchromatin. Involved in the repression of testis-expressed Stellate genes by the homologous Su(Ste) repeats. Required for anteroposterior and dorsoventral axis formation during oogenesis. The protein is Probable ATP-dependent RNA helicase spindle-E (spn-E) of Drosophila yakuba (Fruit fly).